The chain runs to 240 residues: MRIERVDDTTVKLFITYSDIEARGFSREDLWSNRKRGEEFFWSMMDEINEEEDFVVEGPLWIQVHAFEKGVEVTISKSKNEDAMNMSDDDTNHQFDDQVNELLAQTLEGEESLEDLFEQRKQQKKNHQDKQQRRAHKPSNVRNIIVKFDDLEQVIDYAYHNNQNTDEFEDLLYMIDNKYYYSIHFDDSVSQEMINDSYSQLLEFAYPTDKTNIYLNDYAKIIMSHNVTSQVRKYFTDTNE.

Residues 119 to 132 (QRKQQKKNHQDKQQ) are compositionally biased toward basic and acidic residues. Residues 119–138 (QRKQQKKNHQDKQQRRAHKP) form a disordered region.

This sequence belongs to the MecA family. As to quaternary structure, homodimer.

Enables the recognition and targeting of unfolded and aggregated proteins to the ClpC protease or to other proteins involved in proteolysis. This Staphylococcus epidermidis (strain ATCC 35984 / DSM 28319 / BCRC 17069 / CCUG 31568 / BM 3577 / RP62A) protein is Adapter protein MecA.